The sequence spans 77 residues: U8-lycotoxin-Ls1j (77 aa).

A signal peptide spans 1–20 (MKLIIFTGLILFAIVSLIEA). A propeptide spanning residues 21–26 (QANNEK) is cleaved from the precursor.

The protein belongs to the neurotoxin 19 (CSTX) family. 08 (U8-Lctx) subfamily. Contains 4 disulfide bonds. In terms of tissue distribution, expressed by the venom gland.

It localises to the secreted. This Lycosa singoriensis (Wolf spider) protein is U8-lycotoxin-Ls1j.